A 720-amino-acid chain; its full sequence is MNFLNKSLIRDSVVLQNRWKIIMKVSLNWLKELAKIEIIDAHSLANKLTQAGFEVEDVEMVNIDGHKDYILDVTSTANRSDVLSMIGLSREVSALTQADIVKTADIPSAGLFDNISTIISDDSLLNCSYYVSAIMDNIVIQDSPKWLKNRLYSCGFISQNLIIDISNYIMLKWGQPINIIDLKKIADTNTESYIEITSNFCSSKQKSVKLDNKDIALSRDVLITQINNNITSIAGIGINQEFHVDQNTKLIFIEAAIFKEAVVRKSSRSIGIRTESSIRQERGLNIDNGRSAYRETLSLLIELTHGKVKATFLKKETENSTLNIDISLKKIQDVLGPIKDNHTVRFLSFDEIENTLKSLQFKITKKDVKKFNVIIPSYRKYDVFREIDIVEEIARVYGYNQFQSKIPKIQFTKHPSSRRNFIDQIRNILRNLGLTELVHYSLVKSKGEINLKNPLIKDYSTLRSSLLEGLINASAYNIKQSNQTVDGFEIGTVFNLKRNKIIETTKLAIILGGSLDIRSEWSEPAHSLNWYEAKGIIENFFRKLNKSIQWVKRESSNDQINFIQNNKSATLTYNNDNIGLFGELNELTSSQFGFNTELFVLEIDLDILQYSDPEINYLSYRIQPYSKYPCITRDLCIVIPKKMQINSLFQLLNQFNDNDLENMTLFDQYSNKLLGNGKKSIGLRFTYRSDHKTLTNLEIDNKQNELQKNIIKKLNLEIRK.

A B5 domain is found at 319–404; it reads NSTLNIDISL…RVYGYNQFQS (86 aa). Asp382, Asp388, Glu391, and Glu392 together coordinate Mg(2+). The FDX-ACB domain occupies 626 to 719; it reads SKYPCITRDL…IIKKLNLEIR (94 aa).

The protein belongs to the phenylalanyl-tRNA synthetase beta subunit family. Type 1 subfamily. In terms of assembly, tetramer of two alpha and two beta subunits. It depends on Mg(2+) as a cofactor.

Its subcellular location is the plastid. The protein resides in the chloroplast. The catalysed reaction is tRNA(Phe) + L-phenylalanine + ATP = L-phenylalanyl-tRNA(Phe) + AMP + diphosphate + H(+). This Porphyra purpurea (Red seaweed) protein is Phenylalanine--tRNA ligase beta subunit, chloroplastic (pheT).